The primary structure comprises 221 residues: MKVHKESTGLLVSMATLFTGICLSLFYFLGASIVSYLVMIIAIFLYLLTINFFRCPKRHSPFANDDRAVVAPADGKIVAIEEVSENEILHERCIQVSIFMSIFNVHANWFPCEGKVTHVSHKNGHFIAAYLPKSSTDNERSAIVIKTEKGARILARQIAGALARRIVTYAEVGDICSVDAHMGFIKFGSRVDVYLPLGSQVEVKMDQKTVGNQTLIARLPE.

Ser189 (schiff-base intermediate with substrate; via pyruvic acid) is an active-site residue. Ser189 is subject to Pyruvic acid (Ser); by autocatalysis.

This sequence belongs to the phosphatidylserine decarboxylase family. PSD-A subfamily. In terms of assembly, heterodimer of a large membrane-associated beta subunit and a small pyruvoyl-containing alpha subunit. Pyruvate is required as a cofactor. Post-translationally, is synthesized initially as an inactive proenzyme. Formation of the active enzyme involves a self-maturation process in which the active site pyruvoyl group is generated from an internal serine residue via an autocatalytic post-translational modification. Two non-identical subunits are generated from the proenzyme in this reaction, and the pyruvate is formed at the N-terminus of the alpha chain, which is derived from the carboxyl end of the proenzyme. The post-translation cleavage follows an unusual pathway, termed non-hydrolytic serinolysis, in which the side chain hydroxyl group of the serine supplies its oxygen atom to form the C-terminus of the beta chain, while the remainder of the serine residue undergoes an oxidative deamination to produce ammonia and the pyruvoyl prosthetic group on the alpha chain.

The protein localises to the cell membrane. The catalysed reaction is a 1,2-diacyl-sn-glycero-3-phospho-L-serine + H(+) = a 1,2-diacyl-sn-glycero-3-phosphoethanolamine + CO2. It functions in the pathway phospholipid metabolism; phosphatidylethanolamine biosynthesis; phosphatidylethanolamine from CDP-diacylglycerol: step 2/2. In terms of biological role, catalyzes the formation of phosphatidylethanolamine (PtdEtn) from phosphatidylserine (PtdSer). This Porphyromonas gingivalis (strain ATCC 33277 / DSM 20709 / CIP 103683 / JCM 12257 / NCTC 11834 / 2561) protein is Phosphatidylserine decarboxylase proenzyme.